Reading from the N-terminus, the 889-residue chain is DNA mismatch repair protein MutS (889 aa).

Residue 641 to 648 coordinates ATP; it reads GPNMAGKS.

Belongs to the DNA mismatch repair MutS family.

Functionally, this protein is involved in the repair of mismatches in DNA. It is possible that it carries out the mismatch recognition step. This protein has a weak ATPase activity. The protein is DNA mismatch repair protein MutS of Orientia tsutsugamushi (strain Ikeda) (Rickettsia tsutsugamushi).